A 248-amino-acid polypeptide reads, in one-letter code: Granulin (248 aa).

Belongs to the polyhedrin family.

Component of the virus occlusion bodies, which are large proteinaceous structures, that protect the virus from the outside environment for extended periods until they are ingested by insect larvae. This chain is Granulin, found in Xestia c-nigrum granulosis virus (XnGV).